Here is a 498-residue protein sequence, read N- to C-terminus: Ammonium transporter 3 member 1 (498 aa).

Helical transmembrane passes span 33 to 53 (ISAT…YGSI), 58 to 78 (WAVN…LCWV), 143 to 163 (MVYF…GSLL), 171 to 191 (WMLF…FSLW), 206 to 226 (GGYV…YWVG), 241 to 261 (VLLM…FNGG), 276 to 296 (NTNI…VIFF), 301 to 321 (VIGA…GAGL), 325 to 345 (WAAI…MMVV), 369 to 389 (GFLG…SLFL), and 412 to 432 (VAGA…VCLA). The segment at 478-498 (DNNDTHHNNNKAAPSGVTQNV) is disordered. A compositionally biased stretch (polar residues) spans 487 to 498 (NKAAPSGVTQNV).

It belongs to the ammonia transporter channel (TC 1.A.11.2) family. As to expression, expressed in root.

The protein localises to the membrane. Involved in ammonium transport. In Oryza sativa subsp. japonica (Rice), this protein is Ammonium transporter 3 member 1 (AMT3-1).